We begin with the raw amino-acid sequence, 195 residues long: HTH-type transcriptional regulator BetI (195 aa).

The 61-residue stretch at 8 to 68 (EIRRAQLIDA…ATMRHVLRDL (61 aa)) folds into the HTH tetR-type domain. Positions 31–50 (TLASVAQRASISTGIVSHYF) form a DNA-binding region, H-T-H motif.

It participates in amine and polyamine biosynthesis; betaine biosynthesis via choline pathway [regulation]. Functionally, repressor involved in the biosynthesis of the osmoprotectant glycine betaine. It represses transcription of the choline transporter BetT and the genes of BetAB involved in the synthesis of glycine betaine. This chain is HTH-type transcriptional regulator BetI, found in Paraburkholderia phytofirmans (strain DSM 17436 / LMG 22146 / PsJN) (Burkholderia phytofirmans).